The chain runs to 343 residues: L-threonine 3-dehydrogenase (343 aa).

Cys38 contributes to the Zn(2+) binding site. Residues Thr40 and His43 each act as charge relay system in the active site. Residues His63, Glu64, Cys93, Cys96, Cys99, and Cys107 each coordinate Zn(2+). Residues Ile175, Asp195, Arg200, 262–264 (LGI), and 286–287 (IY) contribute to the NAD(+) site.

The protein belongs to the zinc-containing alcohol dehydrogenase family. Homotetramer. The cofactor is Zn(2+).

It is found in the cytoplasm. The catalysed reaction is L-threonine + NAD(+) = (2S)-2-amino-3-oxobutanoate + NADH + H(+). It functions in the pathway amino-acid degradation; L-threonine degradation via oxydo-reductase pathway; glycine from L-threonine: step 1/2. Catalyzes the NAD(+)-dependent oxidation of L-threonine to 2-amino-3-ketobutyrate. This Pectobacterium carotovorum subsp. carotovorum (strain PC1) protein is L-threonine 3-dehydrogenase.